A 154-amino-acid chain; its full sequence is Snaclec lebecin subunit beta (154 aa).

The N-terminal stretch at 1–23 (MGRIIFVSFGLLVVFLSLSGTGA) is a signal peptide. Intrachain disulfides connect Cys25–Cys36, Cys53–Cys150, and Cys125–Cys142. A C-type lectin domain is found at 32–151 (DEEHCYYVFF…CGDDYPFVCK (120 aa)). An N-linked (GlcNAc...) asparagine glycan is attached at Asn139.

In terms of assembly, heterodimer with the alpha subunit (AC W5XDM0); disulfide-linked. Expressed by the venom gland.

It localises to the secreted. Its function is as follows. Inhibits human breast cancer cells (MDA-MB231) migration and proliferation, as well as their adhesion to fibrinogen and fibronectin. This inhibition may be due to the binding to receptors of the integrin family, probably alpha-v/beta-3 (ITGAV/ITGB3) (40% inhibition of cell adhesion) and alpha-5/beta-1 (ITGA5/ITGB1) (by comparison with lebectin). This chain is Snaclec lebecin subunit beta, found in Macrovipera lebetinus (Levantine viper).